Consider the following 511-residue polypeptide: Maturase K (511 aa).

It belongs to the intron maturase 2 family. MatK subfamily.

Its subcellular location is the plastid. The protein resides in the chloroplast. Functionally, usually encoded in the trnK tRNA gene intron. Probably assists in splicing its own and other chloroplast group II introns. The protein is Maturase K of Acorus calamus var. americanus (American sweet flag).